Here is a 470-residue protein sequence, read N- to C-terminus: Ribosomal protein uS12 methylthiotransferase RimO (470 aa).

The region spanning 33-143 (NKIGFVSLGC…VLEHVHQYAP (111 aa)) is the MTTase N-terminal domain. [4Fe-4S] cluster contacts are provided by Cys-42, Cys-78, Cys-107, Cys-175, Cys-179, and Cys-182. Positions 161–398 (LTPKHYAYLK…MLVQQEISAA (238 aa)) constitute a Radical SAM core domain. A TRAM domain is found at 401–467 (QKRIGSTMQV…EYDLWGSILH (67 aa)).

Belongs to the methylthiotransferase family. RimO subfamily. It depends on [4Fe-4S] cluster as a cofactor.

Its subcellular location is the cytoplasm. The catalysed reaction is L-aspartate(89)-[ribosomal protein uS12]-hydrogen + (sulfur carrier)-SH + AH2 + 2 S-adenosyl-L-methionine = 3-methylsulfanyl-L-aspartate(89)-[ribosomal protein uS12]-hydrogen + (sulfur carrier)-H + 5'-deoxyadenosine + L-methionine + A + S-adenosyl-L-homocysteine + 2 H(+). In terms of biological role, catalyzes the methylthiolation of an aspartic acid residue of ribosomal protein uS12. The polypeptide is Ribosomal protein uS12 methylthiotransferase RimO (Vibrio cholerae serotype O1 (strain ATCC 39315 / El Tor Inaba N16961)).